Consider the following 241-residue polypeptide: Large ribosomal subunit protein uL2 (241 aa).

Over residues 1-12 (MGKRLISQRRGR) the composition is skewed to basic residues. Disordered regions lie at residues 1 to 21 (MGKR…RSAS) and 200 to 241 (AVDH…GKRR).

The protein belongs to the universal ribosomal protein uL2 family. As to quaternary structure, part of the 50S ribosomal subunit. Forms a bridge to the 30S subunit in the 70S ribosome.

Its function is as follows. One of the primary rRNA binding proteins. Required for association of the 30S and 50S subunits to form the 70S ribosome, for tRNA binding and peptide bond formation. It has been suggested to have peptidyltransferase activity; this is somewhat controversial. Makes several contacts with the 16S rRNA in the 70S ribosome. This is Large ribosomal subunit protein uL2 from Methanothermobacter thermautotrophicus (strain ATCC 29096 / DSM 1053 / JCM 10044 / NBRC 100330 / Delta H) (Methanobacterium thermoautotrophicum).